The chain runs to 336 residues: Aspartate carbamoyltransferase catalytic subunit (336 aa).

Positions 72 and 73 each coordinate carbamoyl phosphate. Lysine 100 serves as a coordination point for L-aspartate. Carbamoyl phosphate contacts are provided by arginine 122, histidine 152, and glutamine 155. Arginine 185 and arginine 240 together coordinate L-aspartate. The carbamoyl phosphate site is built by glycine 281 and proline 282.

Belongs to the aspartate/ornithine carbamoyltransferase superfamily. ATCase family. As to quaternary structure, heterododecamer (2C3:3R2) of six catalytic PyrB chains organized as two trimers (C3), and six regulatory PyrI chains organized as three dimers (R2).

The catalysed reaction is carbamoyl phosphate + L-aspartate = N-carbamoyl-L-aspartate + phosphate + H(+). It participates in pyrimidine metabolism; UMP biosynthesis via de novo pathway; (S)-dihydroorotate from bicarbonate: step 2/3. Catalyzes the condensation of carbamoyl phosphate and aspartate to form carbamoyl aspartate and inorganic phosphate, the committed step in the de novo pyrimidine nucleotide biosynthesis pathway. This Marinobacter nauticus (strain ATCC 700491 / DSM 11845 / VT8) (Marinobacter aquaeolei) protein is Aspartate carbamoyltransferase catalytic subunit.